The following is a 746-amino-acid chain: Protein C-mannosyl-transferase DPY19L1 (746 aa).

Positions 1–68 (MVLQARSKHR…RAETAAPAPD (68 aa)) are disordered. Pro residues predominate over residues 14–27 (PRPPRPARSSPPPL). Transmembrane regions (helical) follow at residues 93-113 (STLLLASFAALLHWSHITQLF), 139-159 (YSYFKTIVEAPSFLSGVWMIM), 227-247 (ACFYVAVIFMLNGLMMALFFI), 248-268 (YGTYLSGSRLGGLVTVLCFFF), 308-328 (YRGSLIALCISNVFFMLPWQF), 329-349 (AQFVLLTQIASLFAVYVVGYI), 357-377 (IIYTHMISLVLCFVLMFGNSM), 378-398 (LLTSYYASSLVIIWGMLAMKP), 405-425 (VSELSLWVIQGCCWLFGTVTL), 481-501 (LLLPVVLAIVAAIGRKIINDM), 520-540 (GELVYHALQLFAYTALGILIM), and 562-582 (LFGWLFGKVHPGAVVFAVLAA).

The protein belongs to the dpy-19 family.

Its subcellular location is the endoplasmic reticulum membrane. The catalysed reaction is L-tryptophyl-[protein] + a di-trans,poly-cis-dolichyl beta-D-mannosyl phosphate = C-alpha-D-mannosyl-L-tryptophyl-[protein] + a di-trans,poly-cis-dolichyl phosphate + H(+). Its pathway is protein modification; protein glycosylation. Its function is as follows. C-mannosyltransferase that mediates the C-mannosylation tryptophan residues on target proteins. The reaction occurs on the luminal side of the endoplasmic reticulum and involves the transfer of a mannose unit from a dolichylphosphate mannose (Dol-P-Man) donor to an acceptor protein containing a WxxW consensus sequence. C-mannosylates the first two tryptophans in the WxxWxxWxxC sequence motif in thrombospondin (TSP) type-1 repeats of UNC5A. Regulates neurite extension during development. This is Protein C-mannosyl-transferase DPY19L1 (Dpy19l1) from Rattus norvegicus (Rat).